The following is a 173-amino-acid chain: ATP synthase subunit b (173 aa).

The helical transmembrane segment at 19-39 (IVWSLIILVIVAVFFYKFFMP) threads the bilayer.

Belongs to the ATPase B chain family. In terms of assembly, F-type ATPases have 2 components, F(1) - the catalytic core - and F(0) - the membrane proton channel. F(1) has five subunits: alpha(3), beta(3), gamma(1), delta(1), epsilon(1). F(0) has three main subunits: a(1), b(2) and c(10-14). The alpha and beta chains form an alternating ring which encloses part of the gamma chain. F(1) is attached to F(0) by a central stalk formed by the gamma and epsilon chains, while a peripheral stalk is formed by the delta and b chains.

It is found in the cell membrane. F(1)F(0) ATP synthase produces ATP from ADP in the presence of a proton or sodium gradient. F-type ATPases consist of two structural domains, F(1) containing the extramembraneous catalytic core and F(0) containing the membrane proton channel, linked together by a central stalk and a peripheral stalk. During catalysis, ATP synthesis in the catalytic domain of F(1) is coupled via a rotary mechanism of the central stalk subunits to proton translocation. In terms of biological role, component of the F(0) channel, it forms part of the peripheral stalk, linking F(1) to F(0). This is ATP synthase subunit b from Bifidobacterium longum (strain NCC 2705).